Reading from the N-terminus, the 360-residue chain is Phenylalanine--tRNA ligase alpha subunit (360 aa).

Position 260 (glutamate 260) interacts with Mg(2+).

This sequence belongs to the class-II aminoacyl-tRNA synthetase family. Phe-tRNA synthetase alpha subunit type 1 subfamily. As to quaternary structure, tetramer of two alpha and two beta subunits. It depends on Mg(2+) as a cofactor.

The protein localises to the cytoplasm. The catalysed reaction is tRNA(Phe) + L-phenylalanine + ATP = L-phenylalanyl-tRNA(Phe) + AMP + diphosphate + H(+). This is Phenylalanine--tRNA ligase alpha subunit from Rhodopseudomonas palustris (strain BisB5).